Reading from the N-terminus, the 893-residue chain is Alanine--tRNA ligase (893 aa).

Zn(2+) contacts are provided by His-575, His-579, Cys-677, and His-681.

The protein belongs to the class-II aminoacyl-tRNA synthetase family. It depends on Zn(2+) as a cofactor.

The protein resides in the cytoplasm. The enzyme catalyses tRNA(Ala) + L-alanine + ATP = L-alanyl-tRNA(Ala) + AMP + diphosphate. Its function is as follows. Catalyzes the attachment of alanine to tRNA(Ala) in a two-step reaction: alanine is first activated by ATP to form Ala-AMP and then transferred to the acceptor end of tRNA(Ala). Also edits incorrectly charged Ser-tRNA(Ala) and Gly-tRNA(Ala) via its editing domain. This chain is Alanine--tRNA ligase, found in Synechococcus sp. (strain CC9311).